The chain runs to 599 residues: Cartilage intermediate layer protein 1 (599 aa).

3 N-linked (GlcNAc...) asparagine glycosylation sites follow: Asn47, Asn416, and Asn472. Polar residues predominate over residues 550-560; it reads QSTSARPSPAS. The disordered stretch occupies residues 550–599; that stretch reads QSTSARPSPASTVRGRAPSRRQRASSGSQRQPRGVASLRFPGVAQQPLSN. The segment covering 573–583 has biased composition (low complexity); the sequence is ASSGSQRQPRG.

As to quaternary structure, monomer. Interacts with TGFB1. In terms of processing, cleaved into 2 chains possibly by a furin-like protease upon or preceding secretion. In terms of tissue distribution, specifically expressed in cartilage. Expressed at lower level in young cartilage than in adult cartilage. In adult cartilage, it is highly expressed throughout middeep zones.

It is found in the secreted. The protein localises to the extracellular space. Its subcellular location is the extracellular matrix. Its function is as follows. Probably plays a role in cartilage scaffolding. May act by antagonizing TGF-beta1 (TGFB1) and IGF1 functions. Has the ability to suppress IGF1-induced proliferation and sulfated proteoglycan synthesis, and inhibits ligand-induced IGF1R autophosphorylation. May inhibit TGFB1-mediated induction of cartilage matrix genes via its interaction with TGFB1. Overexpression may lead to impair chondrocyte growth and matrix repair and indirectly promote inorganic pyrophosphate (PPi) supersaturation in aging and osteoarthritis cartilage. This is Cartilage intermediate layer protein 1 (CILP) from Sus scrofa (Pig).